We begin with the raw amino-acid sequence, 316 residues long: Cytochrome c biogenesis protein CcsA (316 aa).

Transmembrane regions (helical) follow at residues 12–32 (HISL…LLVY), 44–64 (GMVA…IYSG), 71–91 (LYES…IPYF), 98–118 (LNVL…SGVL), 145–165 (LSYA…VILF), 222–242 (VISL…VWAN), 256–270 (TWAF…IYLH), and 283–303 (AIVA…VNLL).

The protein belongs to the CcmF/CycK/Ccl1/NrfE/CcsA family. As to quaternary structure, may interact with Ccs1.

Its subcellular location is the plastid. The protein localises to the chloroplast thylakoid membrane. Required during biogenesis of c-type cytochromes (cytochrome c6 and cytochrome f) at the step of heme attachment. The sequence is that of Cytochrome c biogenesis protein CcsA from Ranunculus macranthus (Large buttercup).